Here is a 767-residue protein sequence, read N- to C-terminus: Cadherin-5 (767 aa).

Residues 1–29 (MMKQCARRQMTEPVFRVAVLLALCSLSIG) form the signal peptide. A propeptide spanning residues 30–51 (VDVHQAQKTPSISSAALQRHKR) is cleaved from the precursor. Over 30–593 (VDVHQAQKTP…SYARTGMSVS (564 aa)) the chain is Extracellular. The Ca(2+) site is built by Glu-62, Glu-63, Asp-113, and Glu-115. 5 Cadherin domains span residues 86 to 155 (RYIL…IPVF), 155 to 261 (FDSD…IATF), 262 to 373 (KKER…PPIF), 374 to 475 (NQTE…APEL), and 475 to 581 (LTNG…RVEY). An N-linked (GlcNAc...) asparagine glycan is attached at Asn-121. Residues Asp-147, Ile-148, Asn-149, Asp-150, Asn-151, Asp-180, and Asp-182 each contribute to the Ca(2+) site. N-linked (GlcNAc...) asparagine glycosylation occurs at Asn-197. Asp-233 lines the Ca(2+) pocket. N-linked (GlcNAc...) asparagine glycans are attached at residues Asn-374, Asn-477, and Asn-518. Residues 594–614 (ALLAILLCIITILVIVILIVL) form a helical membrane-spanning segment. Topologically, residues 615 to 767 (RRRYQKEVLV…VDGSDSDSSY (153 aa)) are cytoplasmic.

The protein resides in the cell membrane. It localises to the cell junction. It is found in the adherens junction. Its function is as follows. Cadherins are calcium-dependent cell adhesion proteins. They preferentially interact with themselves in a homophilic manner in connecting cells; cadherins may thus contribute to the sorting of heterogeneous cell types. Required for embryonic cardiac looping and heart chamber development, via promotion of cell-cell junction formation and subsequent attachment between the endothelial and myocardial layers of the heart. Required for the directional migration and delamination of endothelial cell monolayers, by which common cardinal veins form via the lumen ensheathment mechanism of vessel development as they migrate and connect with the heart inflow tract. Required for the formation of filopodia extensions (sprouts) at the initiation of intersegmental vessel development, by acting (via its C-terminus) to facilitate anchoring of the actin cytoskeleton to cell junctions in endothelial cells. Then positively regulates dorsal migration of stalk cells and sprout outgrowth towards the dorsal longitudinal anastomotic vessels (DLAV) via endothelial cell elongation. Following contact with the DLAV, required for intersegmental vessel lumen formation, potentially via facilitating the formation and/or extension of endothelial cell tight junctions that are required during tubulogenesis. In Danio rerio (Zebrafish), this protein is Cadherin-5.